Here is a 267-residue protein sequence, read N- to C-terminus: Cilia- and flagella-associated protein 300 (267 aa).

Belongs to the CFAP300 family. As to quaternary structure, interacts with DNAAF2.

It localises to the cytoplasm. Its subcellular location is the cytoskeleton. The protein localises to the cilium axoneme. Its function is as follows. Cilium- and flagellum-specific protein that plays a role in axonemal structure organization and motility. May play a role in outer and inner dynein arm assembly. The sequence is that of Cilia- and flagella-associated protein 300 from Rattus norvegicus (Rat).